The sequence spans 397 residues: Ribosomal RNA large subunit methyltransferase I (397 aa).

The PUA domain occupies 2–80 (SAAIYLVKGR…QDVNRAFFVK (79 aa)).

This sequence belongs to the methyltransferase superfamily. RlmI family.

Its subcellular location is the cytoplasm. The catalysed reaction is cytidine(1962) in 23S rRNA + S-adenosyl-L-methionine = 5-methylcytidine(1962) in 23S rRNA + S-adenosyl-L-homocysteine + H(+). Its function is as follows. Specifically methylates the cytosine at position 1962 (m5C1962) of 23S rRNA. In Vibrio vulnificus (strain YJ016), this protein is Ribosomal RNA large subunit methyltransferase I.